The following is an 85-amino-acid chain: MYYLLFMLKIRLARFGRKKRPYYKIVVANSSSPRDGKFLEQVGSYDPLLSKDDPLRVCLDIERIRYWTSVGAKPTERVAKFVACL.

The protein belongs to the bacterial ribosomal protein bS16 family.

This is Small ribosomal subunit protein bS16 from Neorickettsia sennetsu (strain ATCC VR-367 / Miyayama) (Ehrlichia sennetsu).